A 475-amino-acid polypeptide reads, in one-letter code: MLPTYVRLFTAVCALATTASAVVPIEVKGKDFVNSKTGDRFQILGVDYQPGGSSGFTKDKDPLSDPDACLRDAALMQRLGVNTIRIYNLSPSLNHDECASIFNAAGIYMILDVNSPLYGGYLDRTDPESTYNDVYFKQVFGVIEAFKNFPNTLAFFAGNEVINEQSVKNVPTYVRAIQRDMKDYIAKNLDRSIPVGYSAADIRPILMDTLNYFMCADDANSQSDFFGLNSYSWCGNSSYTKSGYDVLTKDFADASIPVFFSEYGCNEVQPRYFSEVQALYGQEMTQSFSGGLVYEYTQEENDYGLVQINDNGTVTLLVDYDNLMAQYSKLDMSRIQASNTTQTSAKPPKCESSLITNSTFTDSFDLPKRPSKVQTMIDKGLSDANTGKLVEVKNTDIKQKIYNANGEEITGIKLSILASGESNTPGAHSSGSTSGSSSSGGSSSSSSDKESAAGTISVPFVGLLSAASFMAFFML.

The signal sequence occupies residues 1–21; sequence MLPTYVRLFTAVCALATTASA. Cysteines 69 and 98 form a disulfide. Tyr87, Asn159, Glu160, and Asp201 together coordinate (1,3-beta-D-glucosyl)n. The active-site Proton donor is Glu160. Intrachain disulfides connect Cys215–Cys350 and Cys234–Cys265. The N-linked (GlcNAc...) asparagine glycan is linked to Asn236. Glu262 (nucleophile) is an active-site residue. Tyr294 serves as a coordination point for (1,3-beta-D-glucosyl)n. N-linked (GlcNAc...) asparagine glycosylation is found at Asn311, Asn339, and Asn357. The interval 420 to 451 is disordered; sequence GESNTPGAHSSGSTSGSSSSGGSSSSSSDKES. Residues 429 to 446 are compositionally biased toward low complexity; it reads SSGSTSGSSSSGGSSSSS. The GPI-like-anchor amidated serine moiety is linked to residue Ser451. The propeptide at 452-475 is removed in mature form; that stretch reads AAGTISVPFVGLLSAASFMAFFML.

It belongs to the glycosyl hydrolase 72 family. The GPI-like anchor contains a phosphoceramide lipid group.

It localises to the cell membrane. In terms of biological role, splits internally a 1,3-beta-glucan molecule and transfers the newly generated reducing end (the donor) to the non-reducing end of another 1,3-beta-glucan molecule (the acceptor) forming a 1,3-beta linkage, resulting in the elongation of 1,3-beta-glucan chains in the cell wall. Involved in cell wall morphogenesis. This chain is 1,3-beta-glucanosyltransferase gel2 (gel2), found in Aspergillus fumigatus (strain CBS 144.89 / FGSC A1163 / CEA10) (Neosartorya fumigata).